The primary structure comprises 302 residues: NmrA-like family domain-containing protein DDB_G0286605 (302 aa).

NADP(+) contacts are provided by residues 9–14 (GGTGYQ), 35–39 (RNPES), 56–57 (DE), 78–80 (TNS), lysine 130, and 157–160 (YFQN).

Belongs to the NmrA-type oxidoreductase family.

In terms of biological role, may be a redox sensor protein. The protein is NmrA-like family domain-containing protein DDB_G0286605 of Dictyostelium discoideum (Social amoeba).